Here is a 224-residue protein sequence, read N- to C-terminus: Acyl-protein thioesterase 1 (224 aa).

Residues serine 116, aspartate 170, and histidine 203 each act as charge relay system in the active site.

It belongs to the AB hydrolase superfamily. AB hydrolase 2 family.

It localises to the cytoplasm. Its subcellular location is the nucleus. The catalysed reaction is S-hexadecanoyl-L-cysteinyl-[protein] + H2O = L-cysteinyl-[protein] + hexadecanoate + H(+). Its function is as follows. Hydrolyzes fatty acids from S-acylated cysteine residues in proteins with a strong preference for palmitoylated G-alpha proteins over other acyl substrates. Mediates the deacylation of G-alpha proteins such as GPA1 in vivo, but has weak or no activity toward palmitoylated Ras proteins. Has weak lysophospholipase activity in vitro; however such activity may not exist in vivo. The polypeptide is Acyl-protein thioesterase 1 (Schizosaccharomyces pombe (strain 972 / ATCC 24843) (Fission yeast)).